The primary structure comprises 129 residues: UPF0148 protein APE_0207 (129 aa).

Belongs to the UPF0148 family.

This chain is UPF0148 protein APE_0207, found in Aeropyrum pernix (strain ATCC 700893 / DSM 11879 / JCM 9820 / NBRC 100138 / K1).